A 158-amino-acid polypeptide reads, in one-letter code: Flagellar assembly factor FliW (158 aa).

Belongs to the FliW family. In terms of assembly, interacts with translational regulator CsrA and flagellin(s).

The protein localises to the cytoplasm. Functionally, acts as an anti-CsrA protein, binds CsrA and prevents it from repressing translation of its target genes, one of which is flagellin. Binds to flagellin and participates in the assembly of the flagellum. The sequence is that of Flagellar assembly factor FliW from Syntrophus aciditrophicus (strain SB).